The following is a 951-amino-acid chain: Pheromone-regulated membrane protein 10 (951 aa).

Polar residues-rich tracts occupy residues 1 to 10, 68 to 84, and 92 to 104; these read MSSSYGNNGD, GGST…NVGS, and RTAS…NRRQ. Disordered stretches follow at residues 1-293, 313-366, and 433-487; these read MSSS…EDPI, AGKS…TMVS, and NDSS…LPNF. The segment covering 126-135 has biased composition (acidic residues); that stretch reads DDDDEEEEEH. Over residues 219-234 the composition is skewed to basic and acidic residues; sequence PHQETNDGRNSAESHS. Composition is skewed to polar residues over residues 318–332, 354–366, and 468–484; these read PGTQ…SSEH, PFNQ…TMVS, and SQTN…SMNL. Transmembrane regions (helical) follow at residues 635-655, 657-677, 687-707, 711-731, 753-773, 786-806, 811-831, 841-861, 863-883, and 918-938; these read WVSV…AFGG, WINM…QFIV, VFEV…GSIP, ICFG…YIIL, IIYS…FGWI, NISP…LGLI, WTQL…TYFS, FTSA…SRIW, GFAV…GVAS, and VTMI…TLFI.

This sequence belongs to the ThrE exporter (TC 2.A.79) family.

The protein resides in the membrane. In Kluyveromyces lactis (strain ATCC 8585 / CBS 2359 / DSM 70799 / NBRC 1267 / NRRL Y-1140 / WM37) (Yeast), this protein is Pheromone-regulated membrane protein 10.